A 710-amino-acid polypeptide reads, in one-letter code: MMQESATETISNSSMNQNGMSTLSSQLDAGSRDGRSSGDTSSEVSTVELLHLQQQQALQAARQLLLQQQTSGLKSPKSSDKQRPLQVPVSVAMMTPQVITPQQMQQILQQQVLSPQQLQALLQQQQAVMLQQQQLQEFYKKQQEQLHLQLLQQQQQQQQQQQQQQQQQQQQQQQQQQQQQQQQQQQQHPGKQAKEQQQQQQQQQLAAQQLVFQQQLLQMQQLQQQQHLLSLQCQGLISIPPGQAALPVQSLPQAGLSPAEIQQLWKEVTGVHSQEDNGIKHGGLDLTTNNSSSTTSSTTSKASPPITHHSIVNGQSSVLNARRDSSSHEETGASHTLYGHGVCKWPGCESICEDFGQFLKHLNNEHALDDRSTAQCRVQMQVVQQLEIQLSKERERLQAMMTHLHMRPSEPKPSPKPLNLVSSVTMSKNMLETSPQSLPQTPTTPTAPVTPITQGPSVITPASVPNVGAIRRRHSDKYNIPMSSEIAPNYEFYKNADVRPPFTYATLIRQAIMESSDRQLTLNEIYSWFTRTFAYFRRNAATWKNAVRHNLSLHKCFVRVENVKGAVWTVDEVEYQKRRSQKITGSPTLVKNIPTSLGYGAALNASLQAALAESSLPLLSNPGLINNASSGLLQAVHEDLNGSLDHIDSNGNSSPGCSPQPHIHSIHVKEEPVIAEDEDCPMSLVTTANHSPELEDDREIEEEPLSEDLE.

Residues 1 to 28 (MMQESATETISNSSMNQNGMSTLSSQLD) are compositionally biased toward polar residues. Disordered regions lie at residues 1 to 44 (MMQE…SSEV) and 272 to 334 (HSQE…TGAS). Residues 273–283 (SQEDNGIKHGG) are compositionally biased toward basic and acidic residues. Over residues 287 to 300 (TTNNSSSTTSSTTS) the composition is skewed to low complexity. Residues 310 to 319 (SIVNGQSSVL) are compositionally biased toward polar residues. The span at 321–332 (ARRDSSSHEETG) shows a compositional bias: basic and acidic residues. A C2H2-type zinc finger spans residues 343-366 (CKWPGCESICEDFGQFLKHLNNEH). The tract at residues 383 to 404 (VQQLEIQLSKERERLQAMMTHL) is leucine-zipper. Positions 417 to 421 (PLNLV) are CTBP1-binding. The segment covering 433 to 454 (TSPQSLPQTPTTPTAPVTPITQ) has biased composition (low complexity). A disordered region spans residues 433-460 (TSPQSLPQTPTTPTAPVTPITQGPSVIT). Positions 499–589 (RPPFTYATLI…SQKITGSPTL (91 aa)) form a DNA-binding region, fork-head. Disordered regions lie at residues 644 to 663 (LDHI…QPHI) and 673 to 710 (VIAE…EDLE). Positions 694-710 (LEDDREIEEEPLSEDLE) are enriched in acidic residues.

In terms of assembly, forms homodimers and heterodimers with FOXP1 and FOXP4. Dimerization is required for DNA-binding. Interacts with CTBP1. Interacts with FOXP1. Interacts with TBR1. Interacts with ZMYM2.

The protein localises to the nucleus. In terms of biological role, transcriptional repressor that may play a role in the specification and differentiation of lung epithelium. May also play a role in developing neural, gastrointestinal and cardiovascular tissues. Can act with CTBP1 to synergistically repress transcription but CTPBP1 is not essential. Plays a role in synapse formation by regulating SRPX2 levels. The chain is Forkhead box protein P2 (Foxp2) from Rattus norvegicus (Rat).